The sequence spans 481 residues: Glutamyl-tRNA(Gln) amidotransferase subunit A (481 aa).

Catalysis depends on charge relay system residues Lys-74 and Ser-149. The Acyl-ester intermediate role is filled by Ser-173.

It belongs to the amidase family. GatA subfamily. Heterotrimer of A, B and C subunits.

The catalysed reaction is L-glutamyl-tRNA(Gln) + L-glutamine + ATP + H2O = L-glutaminyl-tRNA(Gln) + L-glutamate + ADP + phosphate + H(+). In terms of biological role, allows the formation of correctly charged Gln-tRNA(Gln) through the transamidation of misacylated Glu-tRNA(Gln) in organisms which lack glutaminyl-tRNA synthetase. The reaction takes place in the presence of glutamine and ATP through an activated gamma-phospho-Glu-tRNA(Gln). The polypeptide is Glutamyl-tRNA(Gln) amidotransferase subunit A (Francisella tularensis subsp. mediasiatica (strain FSC147)).